The chain runs to 372 residues: Serine/threonine-protein kinase 17B (372 aa).

Residues Ile33–Leu293 enclose the Protein kinase domain. Residues Leu39 to Val47 and Lys62 contribute to the ATP site. Asp158 acts as the Proton acceptor in catalysis. The segment at Glu305–Asn362 is disordered. Basic and acidic residues predominate over residues His316 to Ser326.

Belongs to the protein kinase superfamily. CAMK Ser/Thr protein kinase family. DAP kinase subfamily. In terms of assembly, interacts with CHP1; the interaction induces CHP1 to translocate from the Golgi to the nucleus. Autophosphorylated. As to expression, highly expressed in placenta, lung, pancreas. Lower levels in heart, brain, liver, skeletal muscle and kidney.

The protein resides in the nucleus. The protein localises to the cell membrane. It is found in the endoplasmic reticulum-Golgi intermediate compartment. The catalysed reaction is L-seryl-[protein] + ATP = O-phospho-L-seryl-[protein] + ADP + H(+). The enzyme catalyses L-threonyl-[protein] + ATP = O-phospho-L-threonyl-[protein] + ADP + H(+). Phosphorylates myosin light chains. Acts as a positive regulator of apoptosis. This chain is Serine/threonine-protein kinase 17B (STK17B), found in Homo sapiens (Human).